The sequence spans 297 residues: Aspartate carbamoyltransferase catalytic subunit (297 aa).

Carbamoyl phosphate is bound by residues arginine 49 and threonine 50. Residue lysine 77 coordinates L-aspartate. Carbamoyl phosphate-binding residues include arginine 99, histidine 129, and glutamine 132. 2 residues coordinate L-aspartate: arginine 162 and arginine 215. Carbamoyl phosphate contacts are provided by glycine 256 and proline 257.

The protein belongs to the aspartate/ornithine carbamoyltransferase superfamily. ATCase family. Heterododecamer (2C3:3R2) of six catalytic PyrB chains organized as two trimers (C3), and six regulatory PyrI chains organized as three dimers (R2).

It carries out the reaction carbamoyl phosphate + L-aspartate = N-carbamoyl-L-aspartate + phosphate + H(+). It participates in pyrimidine metabolism; UMP biosynthesis via de novo pathway; (S)-dihydroorotate from bicarbonate: step 2/3. Functionally, catalyzes the condensation of carbamoyl phosphate and aspartate to form carbamoyl aspartate and inorganic phosphate, the committed step in the de novo pyrimidine nucleotide biosynthesis pathway. This chain is Aspartate carbamoyltransferase catalytic subunit, found in Legionella pneumophila (strain Lens).